The primary structure comprises 444 residues: uncharacterized protein (444 aa).

In terms of domain architecture, HTH gntR-type spans 1–69; that stretch reads MEKYMSLLTR…PKSGYYIVKK (69 aa). The H-T-H motif DNA-binding region spans 29-48; the sequence is IRQLSARYQVSKSTVIRALQ. At K286 the chain carries N6-(pyridoxal phosphate)lysine.

This sequence in the C-terminal section; belongs to the class-I pyridoxal-phosphate-dependent aminotransferase family. The cofactor is pyridoxal 5'-phosphate.

This is an uncharacterized protein from Bacillus subtilis (strain 168).